A 72-amino-acid chain; its full sequence is Small ribosomal subunit protein bS20 (72 aa).

Belongs to the bacterial ribosomal protein bS20 family.

Functionally, binds directly to 16S ribosomal RNA. This Proteus mirabilis protein is Small ribosomal subunit protein bS20 (rpsT).